Consider the following 629-residue polypeptide: Transferrin (629 aa).

The first 21 residues, 1–21, serve as a signal peptide directing secretion; that stretch reads MTIKNVLKLAALLGVLALVQA. Transferrin-like domains lie at 26 to 366 and 372 to 621; these read YRMC…ERDG and MKMC…GLKC. 2 cysteine pairs are disulfide-bonded: Cys29-Cys63 and Cys38-Cys54. Tyr111 provides a ligand contact to Fe(3+). 6 disulfides stabilise this stretch: Cys135–Cys231, Cys184–Cys210, Cys207–Cys216, Cys270–Cys283, Cys375–Cys409, and Cys385–Cys403. The hydrogencarbonate site is built by Thr137, Arg141, Val143, and Gly144. Tyr225 contacts Fe(3+). Fe(3+)-binding residues include Asp408 and His561.

This sequence belongs to the transferrin family. Monomer.

Transferrins are iron binding transport proteins which bind Fe(3+) ion in association with the binding of an anion, usually bicarbonate. This transferrin binds only one Fe(3+) ion per protein molecule. Transports iron ions from the hemolymph into the eggs during the vitellogenic stage (oogenesis). The chain is Transferrin from Sarcophaga peregrina (Flesh fly).